Here is a 935-residue protein sequence, read N- to C-terminus: LPS-assembly protein LptD (935 aa).

A signal peptide spans 1–33; it reads MALKSPAFRRKFPLLVTGGLLALQPLATSYVVA. Positions 52 to 85 are disordered; sequence KTPVNNLPPRPVHEGAAVSSGTEAAGEAETADRP. The segment covering 65-79 has biased composition (low complexity); it reads EGAAVSSGTEAAGEA.

It belongs to the LptD family. As to quaternary structure, component of the lipopolysaccharide transport and assembly complex. Interacts with LptE and LptA.

The protein localises to the cell outer membrane. Functionally, together with LptE, is involved in the assembly of lipopolysaccharide (LPS) at the surface of the outer membrane. The sequence is that of LPS-assembly protein LptD from Pseudomonas putida (strain ATCC 700007 / DSM 6899 / JCM 31910 / BCRC 17059 / LMG 24140 / F1).